Here is a 181-residue protein sequence, read N- to C-terminus: MTTIVSVRRDGKVAMGGDGQVSLGNTVMKGNARKVRRLYHNKVIAGFAGGTADAFTLFERFEAQLEKHQGNLVRAAVELAKDWRTDRALRRLEALLAVADNKASLIITGNGDVIEPENSLIAIGSGGPYAQAAARALLENTELEASDIVKKSLVIAGDICVFTNQNLTLEEIDGTQTPSTV.

The active site involves T2. The Na(+) site is built by G157, C160, and T163.

The protein belongs to the peptidase T1B family. HslV subfamily. In terms of assembly, a double ring-shaped homohexamer of HslV is capped on each side by a ring-shaped HslU homohexamer. The assembly of the HslU/HslV complex is dependent on binding of ATP.

Its subcellular location is the cytoplasm. It carries out the reaction ATP-dependent cleavage of peptide bonds with broad specificity.. Its activity is regulated as follows. Allosterically activated by HslU binding. Functionally, protease subunit of a proteasome-like degradation complex believed to be a general protein degrading machinery. This chain is ATP-dependent protease subunit HslV, found in Hahella chejuensis (strain KCTC 2396).